The sequence spans 945 residues: Netrin receptor UNC5B (945 aa).

A signal peptide spans 1–26 (MRARSGARGALLLALLLCWDPTPSLA). Residues 27–377 (GIDSGGQALP…LEPSGDVALY (351 aa)) lie on the Extracellular side of the membrane. The 98-residue stretch at 48-145 (PHFLLEPEDA…SGTTKSRRAY (98 aa)) folds into the Ig-like domain. 9 disulfide bridges follow: Cys69/Cys130, Cys81/Cys128, Cys174/Cys225, Cys258/Cys295, Cys262/Cys299, Cys273/Cys285, Cys314/Cys348, Cys318/Cys353, and Cys326/Cys338. The Ig-like C2-type domain occupies 153–242 (KNFDQEPLAK…KRRSTTATVI (90 aa)). Asn222 carries N-linked (GlcNAc...) asparagine glycosylation. 2 consecutive TSP type-1 domains span residues 246–300 (NGGW…TVCP) and 302–354 (DGAW…GLCV). N-linked (GlcNAc...) asparagine glycosylation occurs at Asn347. The chain crosses the membrane as a helical span at residues 378-398 (AGLVVAVFVVLAVLMAVGVIV). The Cytoplasmic segment spans residues 399-945 (YRRNCRDFDT…LVAMTTDGDC (547 aa)). The S-palmitoyl cysteine moiety is linked to residue Cys403. The region spanning 543 to 686 (SSVSGTFGCL…LGTYVFTGES (144 aa)) is the ZU5 domain. Tyr581 is subject to Phosphotyrosine. The tract at residues 689 to 838 (RSAVKRLQLA…AETPAGSLDA (150 aa)) is UPA domain. An interaction with DCC region spans residues 707–725 (SLEYSLRVYCLEDTPAALK). Residues 865 to 943 (KICNSLDAPN…EMLVAMTTDG (79 aa)) enclose the Death domain.

It belongs to the unc-5 family. As to quaternary structure, interacts with the cytoplasmic part of DCC. Interacts with GNAI2 via its cytoplasmic part. Interacts (via death domain) with DAPK1 (via death domain). Interacts (via extracellular domain) with FLRT3 (via extracellular domain); the interaction is direct. Interacts (via extracellular domain) with FLRT2 and FLRT3 (via extracellular domain), but has higher affinity for FLRT3. Identified in a complex with FLRT3 and ADGRL3; does not interact with ADGRL3 by itself. Phosphorylated on cytoplasmic tyrosine residues. Post-translationally, proteolytically cleaved by caspases during apoptosis. The cleavage does not take place when the receptor is associated with netrin ligand. Its cleavage by caspases is required to induce apoptosis. In terms of processing, palmitoylation is required for pro-apoptotic activity, but not for location at lipid rafts. Mainly expressed in regions of differentiating neurons. Expressed in the developing sensory ganglia that flank the spinal cord from E12, peaking at E14. Expressed in the roof plate region of the spinal cord from E14.

It is found in the cell membrane. Its subcellular location is the membrane raft. Functionally, receptor for netrin required for axon guidance. Mediates axon repulsion of neuronal growth cones in the developing nervous system upon ligand binding. Axon repulsion in growth cones may be caused by its association with DCC that may trigger signaling for repulsion. Functions as a netrin receptor that negatively regulates vascular branching during angiogenesis. Mediates retraction of tip cell filopodia on endothelial growth cones in response to netrin. It also acts as a dependence receptor required for apoptosis induction when not associated with netrin ligand. Mediates apoptosis by activating DAPK1. In the absence of NTN1, activates DAPK1 by reducing its autoinhibitory phosphorylation at Ser-308 thereby increasing its catalytic activity. The sequence is that of Netrin receptor UNC5B (Unc5b) from Rattus norvegicus (Rat).